We begin with the raw amino-acid sequence, 369 residues long: Anhydro-N-acetylmuramic acid kinase (369 aa).

12–19 (GTSLDGVD) is a binding site for ATP.

Belongs to the anhydro-N-acetylmuramic acid kinase family.

It catalyses the reaction 1,6-anhydro-N-acetyl-beta-muramate + ATP + H2O = N-acetyl-D-muramate 6-phosphate + ADP + H(+). The protein operates within amino-sugar metabolism; 1,6-anhydro-N-acetylmuramate degradation. Its pathway is cell wall biogenesis; peptidoglycan recycling. In terms of biological role, catalyzes the specific phosphorylation of 1,6-anhydro-N-acetylmuramic acid (anhMurNAc) with the simultaneous cleavage of the 1,6-anhydro ring, generating MurNAc-6-P. Is required for the utilization of anhMurNAc either imported from the medium or derived from its own cell wall murein, and thus plays a role in cell wall recycling. The protein is Anhydro-N-acetylmuramic acid kinase of Actinobacillus pleuropneumoniae serotype 5b (strain L20).